The chain runs to 276 residues: MNSRRREPITLQDPEAKYPLPLIEKEKISHNTRRFRFGLPSPDHVLGLPVGNYVQLLAKIDNELVVRAYTPVSSDDDRGFVDLIIKIYFKNVHPQYPEGGKMTQYLENMKIGETIFFRGPRGRLFYHGPGNLGIRPDQTSEPKKTLADHLGMIAGGTGITPMLQLIRHITKDPSDRTRMSLIFANQTEEDILVRKELEEIARTHPDQFNLWYTLDRPPIGWKYSSGFVTADMIKEHLPPPAKSTLILVCGPPPLIQTAAHPNLEKLGYTQDMIFTY.

One can recognise an FAD-binding FR-type domain in the interval 15 to 127; the sequence is EAKYPLPLIE…RGPRGRLFYH (113 aa). Lys17 bears the N6-acetyllysine mark. At Tyr18 the chain carries Phosphotyrosine. FAD is bound by residues 107–137 and 146–181; these read ENMKIGETIFFRGPRGRLFYHGPGNLGIRPD and LADHLGMIAGGTGITPMLQLIRHITKDPSDRTRMSL.

This sequence belongs to the flavoprotein pyridine nucleotide cytochrome reductase family. FAD serves as cofactor. As to expression, restricted expression.

The enzyme catalyses 2 Fe(III)-[cytochrome b5] + NADH = 2 Fe(II)-[cytochrome b5] + NAD(+) + H(+). Functionally, NADH-cytochrome b5 reductases are involved in desaturation and elongation of fatty acids, cholesterol biosynthesis, drug metabolism, and, in erythrocyte, methemoglobin reduction. Responsible for NADH-dependent lucigenin chemiluminescence in spermatozoa by reducing both lucigenin and 2-[4-iodophenyl]-3-[4-nitrophenyl]-5-[2,4-disulfophenyl]-2H tetrazolium monosodium salt (WST-1). The polypeptide is NADH-cytochrome b5 reductase 2 (Homo sapiens (Human)).